We begin with the raw amino-acid sequence, 298 residues long: Protoheme IX farnesyltransferase 1 (298 aa).

Transmembrane regions (helical) follow at residues 21–41 (QVWW…INSF), 43–63 (SYLI…SMGA), 94–114 (KGAF…LLIF), 118–138 (LAAL…SYLL), 144–164 (YSII…WYTV), 168–188 (FSWI…VHVW), 215–235 (TAVS…IPYF), 236–256 (LGFF…PIVI), and 274–294 (FIYT…IHII).

The protein belongs to the UbiA prenyltransferase family. Protoheme IX farnesyltransferase subfamily.

The protein localises to the cell membrane. It carries out the reaction heme b + (2E,6E)-farnesyl diphosphate + H2O = Fe(II)-heme o + diphosphate. It participates in porphyrin-containing compound metabolism; heme O biosynthesis; heme O from protoheme: step 1/1. Its function is as follows. Converts heme B (protoheme IX) to heme O by substitution of the vinyl group on carbon 2 of heme B porphyrin ring with a hydroxyethyl farnesyl side group. In Picrophilus torridus (strain ATCC 700027 / DSM 9790 / JCM 10055 / NBRC 100828 / KAW 2/3), this protein is Protoheme IX farnesyltransferase 1.